A 508-amino-acid chain; its full sequence is Erythropoietin receptor (508 aa).

Residues 1-24 (MDHLGASLWPQVGSLCLLLAGAAW) form the signal peptide. Residues 25–250 (APPPNLPDPK…SLLTPSDLDP (226 aa)) are Extracellular-facing. Cys-52 and Cys-62 form a disulfide bridge. Asn-76 is a glycosylation site (N-linked (GlcNAc...) asparagine). A disulfide bridge connects residues Cys-91 and Cys-107. The Fibronectin type-III domain occupies 147–247 (APVGLVARLA…EPVSLLTPSD (101 aa)). The WSXWS motif signature appears at 233-237 (WSAWS). The helical transmembrane segment at 251 to 273 (LILTLSLILVVILVLLTVLALLS) threads the bilayer. Topologically, residues 274–508 (HRRALKQKIW…PLPPSYVACS (235 aa)) are cytoplasmic. Lys-281 is covalently cross-linked (Glycyl lysine isopeptide (Lys-Gly) (interchain with G-Cter in ubiquitin)). A Box 1 motif motif is present at residues 282–290 (IWPGIPSPE). Phosphotyrosine; by JAK2 is present on residues Tyr-368 and Tyr-426. The ITIM motif motif lies at 452–457 (LKYLYL). A Glycyl lysine isopeptide (Lys-Gly) (interchain with G-Cter in ubiquitin) cross-link involves residue Lys-453. Residues Tyr-454, Tyr-456, Tyr-468, Tyr-485, Tyr-489, and Tyr-504 each carry the phosphotyrosine; by JAK2 modification. Positions 454–456 (YLY) are required for high-affinity SOCS3 binding. The interval 467–494 (DYSSGDSQGAQGGLSDGPYSNPYENSLI) is disordered.

The protein belongs to the type I cytokine receptor family. Type 1 subfamily. In terms of assembly, forms homodimers on EPO stimulation. The tyrosine-phosphorylated form interacts with several SH2 domain-containing proteins including LYN, the adapter protein SH2B2, PTPN6, PTPN11, JAK2, PI3 kinases, STAT5A/B, SOCS3, CRKL. Interacts with INPP5D/SHIP1. SH2B2 binding inhibits the JAK-STAT signaling. Interacts with RHEX; this interaction occurs in a erythropoietin (EPO)-dependent manner. Interacts with ATXN2L. Post-translationally, on EPO stimulation, phosphorylated on C-terminal tyrosine residues by JAK2. The phosphotyrosine motifs are also recruitment sites for several SH2-containing proteins and adapter proteins which mediate cell proliferation. Phosphorylation on Tyr-454 is required for PTPN6 interaction, Tyr-426 for PTPN11. Tyr-426 is also required for SOCS3 binding, but Tyr-454/Tyr-456 motif is the preferred binding site. Ubiquitinated by the ECS(SOCS2) complex following ligand-binding and phosphorylation by JAK2, leading to its degradation by the proteasome. Regulation by the ECS(SOCS2) complex acts as a negative feedback loop of erythropoietin-mediated signaling pathway. Ubiquitination at Lys-281 mediates receptor internalization, whereas ubiquitination at Lys-453 promotes trafficking of activated receptors to the lysosomes for degradation. Ubiquitinated by NOSIP; appears to be either multi-monoubiquitinated or polyubiquitinated. Ubiquitination mediates proliferation and survival of EPO-dependent cells. As to expression, erythroid cells and erythroid progenitor cells. In terms of tissue distribution, isoform EPOR-F is the most abundant form in EPO-dependent erythroleukemia cells and in late-stage erythroid progenitors. Isoform EPOR-S and isoform EPOR-T are the predominant forms in bone marrow. As to expression, isoform EPOR-S and isoform EPOR-T are the predominant forms in bone marrow. Isoform EPOR-T is the most abundant from in early-stage erythroid progenitor cells.

It is found in the cell membrane. Its subcellular location is the secreted. Its function is as follows. Receptor for erythropoietin, which mediates erythropoietin-induced erythroblast proliferation and differentiation. Upon EPO stimulation, EPOR dimerizes triggering the JAK2/STAT5 signaling cascade. In some cell types, can also activate STAT1 and STAT3. May also activate the LYN tyrosine kinase. In terms of biological role, acts as a dominant-negative receptor of EPOR-mediated signaling. The polypeptide is Erythropoietin receptor (Homo sapiens (Human)).